Here is a 129-residue protein sequence, read N- to C-terminus: Gene 58 protein (129 aa).

A disordered region spans residues 87 to 129; sequence GNIPVQRKPARKPSRRVFGESRSSGSSGSTVRPGIRGRSTPWS. Over residues 106 to 115 the composition is skewed to low complexity; sequence ESRSSGSSGS.

In Mycobacterium (Mycobacteriophage D29), this protein is Gene 58 protein (58).